Reading from the N-terminus, the 340-residue chain is N-acetyl-gamma-glutamyl-phosphate reductase (340 aa).

The active site involves C146.

Belongs to the NAGSA dehydrogenase family. Type 1 subfamily.

It localises to the cytoplasm. The enzyme catalyses N-acetyl-L-glutamate 5-semialdehyde + phosphate + NADP(+) = N-acetyl-L-glutamyl 5-phosphate + NADPH + H(+). Its pathway is amino-acid biosynthesis; L-arginine biosynthesis; N(2)-acetyl-L-ornithine from L-glutamate: step 3/4. In terms of biological role, catalyzes the NADPH-dependent reduction of N-acetyl-5-glutamyl phosphate to yield N-acetyl-L-glutamate 5-semialdehyde. This Streptococcus mutans serotype c (strain ATCC 700610 / UA159) protein is N-acetyl-gamma-glutamyl-phosphate reductase.